We begin with the raw amino-acid sequence, 127 residues long: Polyadenylate-binding protein-interacting protein 2 (127 aa).

The segment covering 1-13 (MKDPSRSSTSPSI) has biased composition (polar residues). The segment at 1–24 (MKDPSRSSTSPSIINEDVIINGHS) is disordered. The interval 22 to 75 (GHSHEDDNPFAEYMWMENEEEFNRQIEEELWEEEFIERCFQEMLEEEEEHEWFI) is PABPC1-interacting motif-1 (PAM1). A PABPC1-interacting motif-2 (PAM2) region spans residues 105–120 (LVVKSNLNPNAKEFVP).

The protein belongs to the PAIP2 family. Interacts with the second and third RRM domains and C-terminus regions of PABPC1 in a 2:1 stoichiometry. Ubiquitinated, leading to its degradation by the proteasome. Expressed at highest level in testis, but also abundant in brain, cervix, lung, ovary, placenta, adipose tissue, thymus and thyroid.

The protein resides in the cytoplasm. In terms of biological role, acts as a repressor in the regulation of translation initiation of poly(A)-containing mRNAs. Its inhibitory activity on translation is mediated via its action on PABPC1. Displaces the interaction of PABPC1 with poly(A) RNA and competes with PAIP1 for binding to PABPC1. Its association with PABPC1 results in disruption of the cytoplasmic poly(A) RNP structure organization. This chain is Polyadenylate-binding protein-interacting protein 2 (PAIP2), found in Homo sapiens (Human).